Reading from the N-terminus, the 307-residue chain is Nicotinamide/nicotinic acid mononucleotide adenylyltransferase 2 (307 aa).

Serine 16 and phenylalanine 17 together coordinate NAD(+). Histidine 24 serves as a coordination point for ATP. Residues tryptophan 92 and threonine 95 each coordinate NAD(+). 2 S-palmitoyl cysteine lipidation sites follow: cysteine 164 and cysteine 165. NAD(+) contacts are provided by glycine 200, aspartate 202, leucine 212, tryptophan 213, and arginine 232. Residue 271 to 274 coordinates ATP; the sequence is TKSR.

The protein belongs to the eukaryotic NMN adenylyltransferase family. As to quaternary structure, monomer. Mg(2+) serves as cofactor. Degraded in response to injured neurite. Degradation is caused by polyubiquitination by MYCBP2 after recognition by FBXO45. Post-translationally, palmitoylated; palmitoylation is required for membrane association.

The protein localises to the golgi apparatus membrane. It is found in the cytoplasmic vesicle membrane. Its subcellular location is the cytoplasm. It localises to the cell projection. The protein resides in the axon. It catalyses the reaction beta-nicotinamide D-ribonucleotide + ATP + H(+) = diphosphate + NAD(+). The enzyme catalyses nicotinate beta-D-ribonucleotide + ATP + H(+) = deamido-NAD(+) + diphosphate. Its pathway is cofactor biosynthesis; NAD(+) biosynthesis; NAD(+) from nicotinamide D-ribonucleotide: step 1/1. It functions in the pathway cofactor biosynthesis; NAD(+) biosynthesis; deamido-NAD(+) from nicotinate D-ribonucleotide: step 1/1. With respect to regulation, inhibited by P1-(adenosine-5')-P3-(nicotinamide-riboside-5')-triphosphate (Np3AD) and P1-(adenosine-5')-P4-(nicotinamide-riboside-5')-tetraphosphate (Np4AD). Nicotinamide/nicotinate-nucleotide adenylyltransferase that acts as an axon maintenance factor. Axon survival factor required for the maintenance of healthy axons: acts by delaying Wallerian axon degeneration, an evolutionarily conserved process that drives the loss of damaged axons. Catalyzes the formation of NAD(+) from nicotinamide mononucleotide (NMN) and ATP. Can also use the deamidated form; nicotinic acid mononucleotide (NaMN) as substrate but with a lower efficiency. Cannot use triazofurin monophosphate (TrMP) as substrate. Also catalyzes the reverse reaction, i.e. the pyrophosphorolytic cleavage of NAD(+). For the pyrophosphorolytic activity prefers NAD(+), NADH and NaAD as substrates and degrades nicotinic acid adenine dinucleotide phosphate (NHD) less effectively. Fails to cleave phosphorylated dinucleotides NADP(+), NADPH and NaADP(+). Also acts as an activator of ADP-ribosylation by supporting the catalytic activity of PARP16 and promoting mono-ADP-ribosylation of ribosomes by PARP16. May be involved in the maintenance of axonal integrity. The polypeptide is Nicotinamide/nicotinic acid mononucleotide adenylyltransferase 2 (Nmnat2) (Rattus norvegicus (Rat)).